The sequence spans 151 residues: SsrA-binding protein (151 aa).

Positions 121–151 (GKKLHDKRDTEKDREWQREKQRVMKNQRGAA) are disordered. Positions 126 to 142 (DKRDTEKDREWQREKQR) are enriched in basic and acidic residues.

It belongs to the SmpB family.

The protein localises to the cytoplasm. Functionally, required for rescue of stalled ribosomes mediated by trans-translation. Binds to transfer-messenger RNA (tmRNA), required for stable association of tmRNA with ribosomes. tmRNA and SmpB together mimic tRNA shape, replacing the anticodon stem-loop with SmpB. tmRNA is encoded by the ssrA gene; the 2 termini fold to resemble tRNA(Ala) and it encodes a 'tag peptide', a short internal open reading frame. During trans-translation Ala-aminoacylated tmRNA acts like a tRNA, entering the A-site of stalled ribosomes, displacing the stalled mRNA. The ribosome then switches to translate the ORF on the tmRNA; the nascent peptide is terminated with the 'tag peptide' encoded by the tmRNA and targeted for degradation. The ribosome is freed to recommence translation, which seems to be the essential function of trans-translation. The protein is SsrA-binding protein of Chromobacterium violaceum (strain ATCC 12472 / DSM 30191 / JCM 1249 / CCUG 213 / NBRC 12614 / NCIMB 9131 / NCTC 9757 / MK).